Consider the following 531-residue polypeptide: Apolipoprotein N-acyltransferase (531 aa).

A run of 7 helical transmembrane segments spans residues 8-28, 34-54, 69-89, 105-125, 136-156, 178-198, and 206-226; these read IILL…LLAV, FGIF…IDGV, PAAI…WWLG, LTVV…VVIA, IAAL…LFTG, VVNL…PALI, and AGLA…FYRL. A CN hydrolase domain is found at 243-493; sequence VQPVIDQAKK…RGVIDTILPG (251 aa). Glu-287 functions as the Proton acceptor in the catalytic mechanism. Residue Lys-351 is part of the active site. Cys-405 serves as the catalytic Nucleophile. Residues 507-527 form a helical membrane-spanning segment; the sequence is IFWLTTGILFLVAAISRLGFN.

It belongs to the CN hydrolase family. Apolipoprotein N-acyltransferase subfamily.

It is found in the cell inner membrane. The enzyme catalyses N-terminal S-1,2-diacyl-sn-glyceryl-L-cysteinyl-[lipoprotein] + a glycerophospholipid = N-acyl-S-1,2-diacyl-sn-glyceryl-L-cysteinyl-[lipoprotein] + a 2-acyl-sn-glycero-3-phospholipid + H(+). It participates in protein modification; lipoprotein biosynthesis (N-acyl transfer). Functionally, catalyzes the phospholipid dependent N-acylation of the N-terminal cysteine of apolipoprotein, the last step in lipoprotein maturation. The chain is Apolipoprotein N-acyltransferase from Rhizobium meliloti (strain 1021) (Ensifer meliloti).